We begin with the raw amino-acid sequence, 584 residues long: 2-succinyl-5-enolpyruvyl-6-hydroxy-3-cyclohexene-1-carboxylate synthase (584 aa).

This sequence belongs to the TPP enzyme family. MenD subfamily. In terms of assembly, homodimer. The cofactor is Mg(2+). It depends on Mn(2+) as a cofactor. Thiamine diphosphate is required as a cofactor.

It catalyses the reaction isochorismate + 2-oxoglutarate + H(+) = 5-enolpyruvoyl-6-hydroxy-2-succinyl-cyclohex-3-ene-1-carboxylate + CO2. It functions in the pathway quinol/quinone metabolism; 1,4-dihydroxy-2-naphthoate biosynthesis; 1,4-dihydroxy-2-naphthoate from chorismate: step 2/7. It participates in quinol/quinone metabolism; menaquinone biosynthesis. Catalyzes the thiamine diphosphate-dependent decarboxylation of 2-oxoglutarate and the subsequent addition of the resulting succinic semialdehyde-thiamine pyrophosphate anion to isochorismate to yield 2-succinyl-5-enolpyruvyl-6-hydroxy-3-cyclohexene-1-carboxylate (SEPHCHC). The sequence is that of 2-succinyl-5-enolpyruvyl-6-hydroxy-3-cyclohexene-1-carboxylate synthase from Bacillus cereus (strain ZK / E33L).